The primary structure comprises 419 residues: N-acylglucosamine 2-epimerase (419 aa).

A leucine-zipper region spans residues 185 to 206 (LLNLVEQLGEEDEEMTDKYAEL). Residue Ser-418 is modified to Phosphoserine.

Belongs to the N-acylglucosamine 2-epimerase family. In terms of assembly, homodimer. Forms a heterodimer with renin and inhibits its activity. As to expression, kidney, adrenal gland, brain, lung, spleen, ovary, testis and heart.

It carries out the reaction an N-acyl-D-glucosamine = an N-acyl-D-mannosamine. Its pathway is amino-sugar metabolism; N-acetylneuraminate degradation. Catalyzes the interconversion of N-acetylglucosamine to N-acetylmannosamine. Involved in the N-glycolylneuraminic acid (Neu5Gc) degradation pathway. The protein is N-acylglucosamine 2-epimerase (Renbp) of Rattus norvegicus (Rat).